The following is a 98-amino-acid chain: Alpha-elicitin MGM-alpha (98 aa).

3 cysteine pairs are disulfide-bonded: Cys3/Cys71, Cys27/Cys56, and Cys51/Cys95.

It belongs to the elicitin family.

The protein localises to the secreted. In terms of biological role, induces local and distal defense responses (incompatible hypersensitive reaction) in plants from the solanaceae and cruciferae families. Elicits leaf necrosis and causes the accumulation of pathogenesis-related proteins. Might interact with the lipidic molecules of the plasma membrane. The sequence is that of Alpha-elicitin MGM-alpha from Phytophthora megasperma (Potato pink rot fungus).